The following is an 80-amino-acid chain: Myocilin opposite strand protein (80 aa).

A disordered region spans residues 53–80 (EQAPPPHRTYLTVPPAPPPSPAEDPTVS).

This Homo sapiens (Human) protein is Myocilin opposite strand protein.